A 180-amino-acid polypeptide reads, in one-letter code: MYKLIKARSIVRIPPNEFGKPLNEIALNELRQQYQEKILKDLGLVLAILNVKTSEEGILVFGDGATYHEVEFDMITYVPVVQEVVEGEVLQVDNYGIFVNLGPMDGLVHISQITDDTLKYDNVRGIIFGEKSKKVIQKGDKVRARVISVASTVTGRLPRIALTMRQPYLGKLEWITQTKK.

The region spanning 82–165 (QEVVEGEVLQ…RLPRIALTMR (84 aa)) is the S1 motif domain.

The protein belongs to the eukaryotic RPB7/RPC8 RNA polymerase subunit family. Part of the 13-subunit RNA polymerase complex. Forms a stalk with Rpo4 that extends from the main structure.

Its subcellular location is the cytoplasm. The catalysed reaction is RNA(n) + a ribonucleoside 5'-triphosphate = RNA(n+1) + diphosphate. DNA-dependent RNA polymerase (RNAP) catalyzes the transcription of DNA into RNA using the four ribonucleoside triphosphates as substrates. The sequence is that of DNA-directed RNA polymerase subunit Rpo7 from Saccharolobus solfataricus (strain ATCC 35092 / DSM 1617 / JCM 11322 / P2) (Sulfolobus solfataricus).